We begin with the raw amino-acid sequence, 444 residues long: Phosphoglucosamine mutase (444 aa).

S104 (phosphoserine intermediate) is an active-site residue. Residues S104, D243, D245, and D247 each coordinate Mg(2+). Position 104 is a phosphoserine (S104).

The protein belongs to the phosphohexose mutase family. Mg(2+) serves as cofactor. In terms of processing, activated by phosphorylation.

The catalysed reaction is alpha-D-glucosamine 1-phosphate = D-glucosamine 6-phosphate. Catalyzes the conversion of glucosamine-6-phosphate to glucosamine-1-phosphate. The polypeptide is Phosphoglucosamine mutase (Neisseria gonorrhoeae (strain ATCC 700825 / FA 1090)).